Consider the following 374-residue polypeptide: Lipid-A-disaccharide synthase (374 aa).

This sequence belongs to the LpxB family.

The catalysed reaction is a lipid X + a UDP-2-N,3-O-bis[(3R)-3-hydroxyacyl]-alpha-D-glucosamine = a lipid A disaccharide + UDP + H(+). Its pathway is bacterial outer membrane biogenesis; LPS lipid A biosynthesis. Its function is as follows. Condensation of UDP-2,3-diacylglucosamine and 2,3-diacylglucosamine-1-phosphate to form lipid A disaccharide, a precursor of lipid A, a phosphorylated glycolipid that anchors the lipopolysaccharide to the outer membrane of the cell. The protein is Lipid-A-disaccharide synthase of Pseudomonas fluorescens (strain ATCC BAA-477 / NRRL B-23932 / Pf-5).